A 253-amino-acid polypeptide reads, in one-letter code: uncharacterized protein (253 aa).

Residues Ile-17, Ser-36, Asp-62, Asn-89, Tyr-158, Lys-162, Val-191, and Thr-193 each coordinate NADP(+). The Proton donor role is filled by Tyr-158. Lys-162 (lowers pKa of active site Tyr) is an active-site residue.

This sequence belongs to the short-chain dehydrogenases/reductases (SDR) family.

The protein resides in the cytoplasm. Its subcellular location is the nucleus. This is an uncharacterized protein from Schizosaccharomyces pombe (strain 972 / ATCC 24843) (Fission yeast).